Reading from the N-terminus, the 283-residue chain is Bifunctional protein FolD (283 aa).

NADP(+) contacts are provided by residues 165–167 (GRS) and Ser190.

It belongs to the tetrahydrofolate dehydrogenase/cyclohydrolase family. Homodimer.

It carries out the reaction (6R)-5,10-methylene-5,6,7,8-tetrahydrofolate + NADP(+) = (6R)-5,10-methenyltetrahydrofolate + NADPH. The catalysed reaction is (6R)-5,10-methenyltetrahydrofolate + H2O = (6R)-10-formyltetrahydrofolate + H(+). Its pathway is one-carbon metabolism; tetrahydrofolate interconversion. In terms of biological role, catalyzes the oxidation of 5,10-methylenetetrahydrofolate to 5,10-methenyltetrahydrofolate and then the hydrolysis of 5,10-methenyltetrahydrofolate to 10-formyltetrahydrofolate. The chain is Bifunctional protein FolD from Variovorax paradoxus (strain S110).